Here is a 186-residue protein sequence, read N- to C-terminus: dCTP deaminase (186 aa).

107-112 (KSTYAR) provides a ligand contact to dCTP. Glu-133 acts as the Proton donor/acceptor in catalysis. 3 residues coordinate dCTP: Gln-152, Tyr-166, and Gln-176.

It belongs to the dCTP deaminase family. Homotrimer.

It carries out the reaction dCTP + H2O + H(+) = dUTP + NH4(+). The protein operates within pyrimidine metabolism; dUMP biosynthesis; dUMP from dCTP (dUTP route): step 1/2. Catalyzes the deamination of dCTP to dUTP. This chain is dCTP deaminase, found in Campylobacter jejuni subsp. jejuni serotype O:2 (strain ATCC 700819 / NCTC 11168).